The primary structure comprises 268 residues: Glucosamine-6-phosphate deaminase (268 aa).

Asp72 (proton acceptor; for enolization step) is an active-site residue. The For ring-opening step role is filled by Asp141. Residue His143 is the Proton acceptor; for ring-opening step of the active site. The active-site For ring-opening step is Glu148.

It belongs to the glucosamine/galactosamine-6-phosphate isomerase family. NagB subfamily.

The enzyme catalyses alpha-D-glucosamine 6-phosphate + H2O = beta-D-fructose 6-phosphate + NH4(+). It functions in the pathway amino-sugar metabolism; N-acetylneuraminate degradation; D-fructose 6-phosphate from N-acetylneuraminate: step 5/5. With respect to regulation, allosterically activated by N-acetylglucosamine 6-phosphate (GlcNAc6P). Catalyzes the reversible isomerization-deamination of glucosamine 6-phosphate (GlcN6P) to form fructose 6-phosphate (Fru6P) and ammonium ion. The protein is Glucosamine-6-phosphate deaminase of Borrelia garinii subsp. bavariensis (strain ATCC BAA-2496 / DSM 23469 / PBi) (Borreliella bavariensis).